A 183-amino-acid polypeptide reads, in one-letter code: uncharacterized protein (183 aa).

A GGDEF domain is found at proline 55–arginine 183.

Its function is as follows. Might be involved in pSAM2 replication control. This is an uncharacterized protein from Streptomyces ambofaciens.